The sequence spans 263 residues: Hydroxyethylthiazole kinase 1 (263 aa).

Met42 lines the substrate pocket. Positions 118 and 164 each coordinate ATP. Gly191 contacts substrate.

It belongs to the Thz kinase family. It depends on Mg(2+) as a cofactor.

It carries out the reaction 5-(2-hydroxyethyl)-4-methylthiazole + ATP = 4-methyl-5-(2-phosphooxyethyl)-thiazole + ADP + H(+). It participates in cofactor biosynthesis; thiamine diphosphate biosynthesis; 4-methyl-5-(2-phosphoethyl)-thiazole from 5-(2-hydroxyethyl)-4-methylthiazole: step 1/1. Its function is as follows. Catalyzes the phosphorylation of the hydroxyl group of 4-methyl-5-beta-hydroxyethylthiazole (THZ). In Clostridium botulinum (strain 657 / Type Ba4), this protein is Hydroxyethylthiazole kinase 1.